We begin with the raw amino-acid sequence, 116 residues long: Large ribosomal subunit protein bL19 (116 aa).

Belongs to the bacterial ribosomal protein bL19 family.

In terms of biological role, this protein is located at the 30S-50S ribosomal subunit interface and may play a role in the structure and function of the aminoacyl-tRNA binding site. In Pseudomonas savastanoi pv. phaseolicola (strain 1448A / Race 6) (Pseudomonas syringae pv. phaseolicola (strain 1448A / Race 6)), this protein is Large ribosomal subunit protein bL19.